The chain runs to 308 residues: MQEKISKFEDFLTQLQQNITTALEQHETNAAKFISDKWQKPDTPDQKLKGYGNSMIIEGGEIFEKGVVAFSRVHGSELPPSATAKRQELAGKSFIATGLSLVIHPRNPFVPTSHANFRIFIAGADTDNPIWWFGGGFDLTPYYPFEEDAIHWHQTAKNICDKHDKTYYPKFKKWCDEYFYLKHRDEYRGVGGLFFDDLNDKSFDECFNFVTDCANSYLDAYIPIVAQRKNIEYSQKHKDFQLYRRGRYVEFNLVFDRGTIFGLQSGGRTESILSSMPPMATWKYNWQPEPGSEEEKVYQYIKPRDWIK.

Serine 100 contacts substrate. A divalent metal cation-binding residues include histidine 104 and histidine 114. Histidine 114 acts as the Proton donor in catalysis. 116-118 (NFR) provides a ligand contact to substrate. A divalent metal cation-binding residues include histidine 153 and histidine 183. The important for dimerization stretch occupies residues 248-283 (YVEFNLVFDRGTIFGLQSGGRTESILSSMPPMATWK). 266-268 (GGR) is a binding site for substrate.

This sequence belongs to the aerobic coproporphyrinogen-III oxidase family. Homodimer. Requires a divalent metal cation as cofactor.

It is found in the cytoplasm. The catalysed reaction is coproporphyrinogen III + O2 + 2 H(+) = protoporphyrinogen IX + 2 CO2 + 2 H2O. It functions in the pathway porphyrin-containing compound metabolism; protoporphyrin-IX biosynthesis; protoporphyrinogen-IX from coproporphyrinogen-III (O2 route): step 1/1. Its function is as follows. Involved in the heme biosynthesis. Catalyzes the aerobic oxidative decarboxylation of propionate groups of rings A and B of coproporphyrinogen-III to yield the vinyl groups in protoporphyrinogen-IX. This chain is Oxygen-dependent coproporphyrinogen-III oxidase, found in Francisella tularensis subsp. holarctica (strain LVS).